The primary structure comprises 386 residues: LL-diaminopimelate aminotransferase (386 aa).

Tyr-13 and Gly-38 together coordinate substrate. Pyridoxal 5'-phosphate-binding positions include Tyr-67, 101-102 (SK), Tyr-126, Asn-176, Tyr-207, and 235-237 (SLS). Residues Lys-102, Tyr-126, and Asn-176 each coordinate substrate. Lys-238 is modified (N6-(pyridoxal phosphate)lysine). Arg-246 provides a ligand contact to pyridoxal 5'-phosphate. Arg-364 contacts substrate.

This sequence belongs to the class-I pyridoxal-phosphate-dependent aminotransferase family. LL-diaminopimelate aminotransferase subfamily. In terms of assembly, homodimer. Pyridoxal 5'-phosphate is required as a cofactor.

The catalysed reaction is (2S,6S)-2,6-diaminopimelate + 2-oxoglutarate = (S)-2,3,4,5-tetrahydrodipicolinate + L-glutamate + H2O + H(+). It participates in amino-acid biosynthesis; L-lysine biosynthesis via DAP pathway; LL-2,6-diaminopimelate from (S)-tetrahydrodipicolinate (aminotransferase route): step 1/1. Functionally, involved in the synthesis of meso-diaminopimelate (m-DAP or DL-DAP), required for both lysine and peptidoglycan biosynthesis. Catalyzes the direct conversion of tetrahydrodipicolinate to LL-diaminopimelate. The chain is LL-diaminopimelate aminotransferase from Natranaerobius thermophilus (strain ATCC BAA-1301 / DSM 18059 / JW/NM-WN-LF).